A 189-amino-acid polypeptide reads, in one-letter code: Lipid A acyltransferase PagP (189 aa).

A signal peptide spans 1–23 (MKLKSVLYLLMLLNCLGLKSAHA). Active-site residues include His-61, Asp-104, and Ser-105.

This sequence belongs to the lipid A palmitoyltransferase family. Homodimer.

Its subcellular location is the cell outer membrane. The catalysed reaction is a lipid A + a 1,2-diacyl-sn-glycero-3-phosphocholine = a hepta-acyl lipid A + a 2-acyl-sn-glycero-3-phosphocholine. It carries out the reaction a lipid IVA + a 1,2-diacyl-sn-glycero-3-phosphocholine = a lipid IVB + a 2-acyl-sn-glycero-3-phosphocholine. It catalyses the reaction a lipid IIA + a 1,2-diacyl-sn-glycero-3-phosphocholine = a lipid IIB + a 2-acyl-sn-glycero-3-phosphocholine. Functionally, transfers a fatty acid residue from the sn-1 position of a phospholipid to the N-linked hydroxyfatty acid chain on the proximal unit of lipid A or its precursors. The protein is Lipid A acyltransferase PagP of Erwinia amylovora (strain ATCC 49946 / CCPPB 0273 / Ea273 / 27-3).